A 439-amino-acid chain; its full sequence is MPLIIIAAGVALLLILMIGFKVNGFIALVLVAAVVGFAEGMDAQAVLHSIQNGIGSTLGGLAMILGFGAMLGKLISDTGAAQRIATTLIATFGKKRVQWALVITGLVVGLAMFFEVGFVLLLPLVFTIVASSGLPLLYVGVPMVAALSVTHCFLPPHPGPTAIATIFEANLGTTLLYGFIITIPTVIVAGPLFSKLLTRFEKAPPEGLFNPHLFSEEEMPSFWNSIFAAVIPVILMAIAAVCEITLPKTNTVRLFFEFVGNPAVALFIAIVIAIFTLGRRNGRTIEQIMDIIGDSIGAIAMIVFIIAGGGAFKQVLVDSGVGHYISHLMTGTTLSPLLMCWTVAALLRIALGSATVAAITTAGVVLPIINVTHADPALMVLATGAGSVIASHVNDPGFWLFKGYFNLTVGETLRTWTVMETLISIMGLLGVLAINAVLH.

The Periplasmic portion of the chain corresponds to 1–11; that stretch reads MPLIIIAAGVA. Residues 12–34 form a helical membrane-spanning segment; that stretch reads LLLILMIGFKVNGFIALVLVAAV. Residues 35–53 are Cytoplasmic-facing; sequence VGFAEGMDAQAVLHSIQNG. The chain crosses the membrane as a helical span at residues 54-76; it reads IGSTLGGLAMILGFGAMLGKLIS. The Periplasmic portion of the chain corresponds to 77-96; sequence DTGAAQRIATTLIATFGKKR. A helical transmembrane segment spans residues 97–114; it reads VQWALVITGLVVGLAMFF. Over 115-118 the chain is Cytoplasmic; it reads EVGF. A helical membrane pass occupies residues 119–141; sequence VLLLPLVFTIVASSGLPLLYVGV. The Periplasmic portion of the chain corresponds to 142 to 170; the sequence is PMVAALSVTHCFLPPHPGPTAIATIFEAN. A helical transmembrane segment spans residues 171–193; sequence LGTTLLYGFIITIPTVIVAGPLF. At 194–218 the chain is on the cytoplasmic side; it reads SKLLTRFEKAPPEGLFNPHLFSEEE. The helical transmembrane segment at 219–241 threads the bilayer; that stretch reads MPSFWNSIFAAVIPVILMAIAAV. Over 242–253 the chain is Periplasmic; the sequence is CEITLPKTNTVR. A helical transmembrane segment spans residues 254–276; that stretch reads LFFEFVGNPAVALFIAIVIAIFT. Residues 277-290 are Cytoplasmic-facing; that stretch reads LGRRNGRTIEQIMD. A helical transmembrane segment spans residues 291–310; sequence IIGDSIGAIAMIVFIIAGGG. Residues 311 to 322 are Periplasmic-facing; that stretch reads AFKQVLVDSGVG. The helical transmembrane segment at 323–345 threads the bilayer; that stretch reads HYISHLMTGTTLSPLLMCWTVAA. At 346–348 the chain is on the cytoplasmic side; that stretch reads LLR. The helical transmembrane segment at 349-371 threads the bilayer; the sequence is IALGSATVAAITTAGVVLPIINV. Over 372–377 the chain is Periplasmic; the sequence is THADPA. A helical transmembrane segment spans residues 378–400; it reads LMVLATGAGSVIASHVNDPGFWL. Topologically, residues 401 to 414 are cytoplasmic; sequence FKGYFNLTVGETLR. The helical transmembrane segment at 415 to 437 threads the bilayer; sequence TWTVMETLISIMGLLGVLAINAV. Residues 438–439 are Periplasmic-facing; that stretch reads LH.

Belongs to the GntP permease family.

The protein resides in the cell inner membrane. The enzyme catalyses L-idonate(in) + H(+)(in) = L-idonate(out) + H(+)(out). The catalysed reaction is D-gluconate(in) + H(+)(in) = D-gluconate(out) + H(+)(out). It carries out the reaction 5-dehydro-D-gluconate(in) + H(+)(in) = 5-dehydro-D-gluconate(out) + H(+)(out). Its pathway is carbohydrate acid metabolism; L-idonate degradation. In terms of biological role, transporter which is probably involved in L-idonate metabolism. Transports L-idonate from the periplasm across the inner membrane. Can also transport D-gluconate and 5-keto-D-gluconate. It has been reported that gluconate uptake probably occurs via a proton-symport mechanism in E.coli. In Escherichia coli (strain K12), this protein is Gnt-II system L-idonate transporter.